The primary structure comprises 116 residues: DNA polymerase epsilon subunit 4 (116 aa).

The segment covering 1–10 (MAAAAPGSGA) has biased composition (low complexity). The disordered stretch occupies residues 1–36 (MAAAAPGSGAAREEEGTGGDAATPQPPAPTSAPGAR).

In terms of assembly, component of the DNA polymerase epsilon complex consisting of four subunits: the catalytic subunit POLE and the accessory subunits POLE2, POLE3 and POLE4. Interaction with POLE3 is a prerequisite for further binding with POLE and POLE2.

The protein localises to the nucleus. Functionally, accessory component of the DNA polymerase epsilon complex. Participates in DNA repair and in chromosomal DNA replication. The protein is DNA polymerase epsilon subunit 4 (POLE4) of Bos taurus (Bovine).